Reading from the N-terminus, the 345-residue chain is N-acetyl-gamma-glutamyl-phosphate reductase (345 aa).

The active site involves Cys149.

It belongs to the NAGSA dehydrogenase family. Type 1 subfamily.

The protein resides in the cytoplasm. It catalyses the reaction N-acetyl-L-glutamate 5-semialdehyde + phosphate + NADP(+) = N-acetyl-L-glutamyl 5-phosphate + NADPH + H(+). Its pathway is amino-acid biosynthesis; L-arginine biosynthesis; N(2)-acetyl-L-ornithine from L-glutamate: step 3/4. Its function is as follows. Catalyzes the NADPH-dependent reduction of N-acetyl-5-glutamyl phosphate to yield N-acetyl-L-glutamate 5-semialdehyde. This is N-acetyl-gamma-glutamyl-phosphate reductase from Bacillus thuringiensis subsp. konkukian (strain 97-27).